The primary structure comprises 130 residues: S-adenosylmethionine decarboxylase proenzyme (130 aa).

The active-site Schiff-base intermediate with substrate; via pyruvic acid is the Ser-66. At Ser-66 the chain carries Pyruvic acid (Ser); by autocatalysis. The active-site Proton acceptor; for processing activity is the His-71. Cys-86 acts as the Proton donor; for catalytic activity in catalysis.

It belongs to the prokaryotic AdoMetDC family. Type 1 subfamily. Heterotetramer of two alpha and two beta chains arranged as a dimer of alpha/beta heterodimers. The cofactor is pyruvate. In terms of processing, is synthesized initially as an inactive proenzyme. Formation of the active enzyme involves a self-maturation process in which the active site pyruvoyl group is generated from an internal serine residue via an autocatalytic post-translational modification. Two non-identical subunits are generated from the proenzyme in this reaction, and the pyruvate is formed at the N-terminus of the alpha chain, which is derived from the carboxyl end of the proenzyme. The post-translation cleavage follows an unusual pathway, termed non-hydrolytic serinolysis, in which the side chain hydroxyl group of the serine supplies its oxygen atom to form the C-terminus of the beta chain, while the remainder of the serine residue undergoes an oxidative deamination to produce ammonia and the pyruvoyl group blocking the N-terminus of the alpha chain.

It catalyses the reaction S-adenosyl-L-methionine + H(+) = S-adenosyl 3-(methylsulfanyl)propylamine + CO2. Its pathway is amine and polyamine biosynthesis; S-adenosylmethioninamine biosynthesis; S-adenosylmethioninamine from S-adenosyl-L-methionine: step 1/1. Catalyzes the decarboxylation of S-adenosylmethionine to S-adenosylmethioninamine (dcAdoMet), the propylamine donor required for the synthesis of the polyamines spermine and spermidine from the diamine putrescine. This chain is S-adenosylmethionine decarboxylase proenzyme, found in Bacillus cereus (strain ATCC 10987 / NRS 248).